We begin with the raw amino-acid sequence, 141 residues long: Ribosome maturation factor RimP (141 aa).

Belongs to the RimP family.

The protein localises to the cytoplasm. In terms of biological role, required for maturation of 30S ribosomal subunits. In Laribacter hongkongensis (strain HLHK9), this protein is Ribosome maturation factor RimP.